The following is a 523-amino-acid chain: 2-isopropylmalate synthase (523 aa).

The Pyruvate carboxyltransferase domain occupies 5 to 267 (VIIFDTTLRD…HTNINHHEIW (263 aa)). Residues Asp-14, His-202, His-204, and Asn-238 each contribute to the Mn(2+) site. The tract at residues 392–523 (RLDYFSVQSG…HNKENNKEIV (132 aa)) is regulatory domain.

Belongs to the alpha-IPM synthase/homocitrate synthase family. LeuA type 1 subfamily. As to quaternary structure, homodimer. Mn(2+) is required as a cofactor.

The protein localises to the cytoplasm. It catalyses the reaction 3-methyl-2-oxobutanoate + acetyl-CoA + H2O = (2S)-2-isopropylmalate + CoA + H(+). The protein operates within amino-acid biosynthesis; L-leucine biosynthesis; L-leucine from 3-methyl-2-oxobutanoate: step 1/4. Its function is as follows. Catalyzes the condensation of the acetyl group of acetyl-CoA with 3-methyl-2-oxobutanoate (2-ketoisovalerate) to form 3-carboxy-3-hydroxy-4-methylpentanoate (2-isopropylmalate). The sequence is that of 2-isopropylmalate synthase from Salmonella arizonae (strain ATCC BAA-731 / CDC346-86 / RSK2980).